Reading from the N-terminus, the 193-residue chain is Thioredoxin peroxidase (193 aa).

In terms of domain architecture, Thioredoxin spans 3–161 (AVVGKLAPSF…ALRLLDAFQF (159 aa)). Catalysis depends on cysteine 48, which acts as the Cysteine sulfenic acid (-SOH) intermediate.

It belongs to the peroxiredoxin family. AhpC/Prx1 subfamily. As to quaternary structure, homodimer; disulfide-linked, upon oxidation.

The enzyme catalyses a hydroperoxide + [thioredoxin]-dithiol = an alcohol + [thioredoxin]-disulfide + H2O. Functionally, thiol-specific peroxidase that catalyzes the reduction of hydrogen peroxide and organic hydroperoxides to water and alcohols, respectively. Plays a role in cell protection against oxidative stress by detoxifying peroxides and as sensor of hydrogen peroxide-mediated signaling events. This is Thioredoxin peroxidase (TPX) from Echinococcus granulosus (Hydatid tapeworm).